Here is a 695-residue protein sequence, read N- to C-terminus: L-type lectin-domain containing receptor kinase S.7 (695 aa).

The signal sequence occupies residues 1-23; it reads MPPRCRRLPLLFILLLAVRPLSA. Residues 24–331 are Extracellular-facing; the sequence is AAASSIAAAP…NHRRRHLFYK (308 aa). The tract at residues 37–276 is legume-lectin like; it reads YRRISWASNL…VERWTFRTFG (240 aa). Asn45 and Asn279 each carry an N-linked (GlcNAc...) asparagine glycan. A compositionally biased stretch (pro residues) spans 286–320; it reads PTKYIGPMPPNNQPLPPPPSPSPSPPPPSPPPPPH. The tract at residues 286 to 323 is disordered; the sequence is PTKYIGPMPPNNQPLPPPPSPSPSPPPPSPPPPPHPNH. Residues 332 to 352 traverse the membrane as a helical segment; that stretch reads VLGGVLGGMVLLGLVVVGSAV. Residues 353–695 are Cytoplasmic-facing; sequence LLGRSVRRKN…TANTAFFSCR (343 aa). Thr376 bears the Phosphothreonine mark. Ser378 is modified (phosphoserine). Thr386 and Thr403 each carry phosphothreonine. The region spanning 389 to 661 is the Protein kinase domain; it reads FDSGNVIGVG…SMLDGTAPLI (273 aa). ATP contacts are provided by residues 395–403 and Lys418; that span reads IGVGGSGAT. The active-site Proton acceptor is the Asp514. Thr657 is subject to Phosphothreonine.

The protein in the N-terminal section; belongs to the leguminous lectin family. It in the C-terminal section; belongs to the protein kinase superfamily. Ser/Thr protein kinase family. Interacts with INP1. Interaction with INP1 is required for DAF1 polar localization at the future aperture sites in tetrads. Post-translationally, autophosphorylated at Thr-376; Ser-378; Thr-386; Thr-403 and Thr-657. Expressed in roots, leaves, lemma, palea, pistil and anthers.

It is found in the cell membrane. The protein localises to the cytoplasm. It localises to the cytosol. The enzyme catalyses L-seryl-[protein] + ATP = O-phospho-L-seryl-[protein] + ADP + H(+). It carries out the reaction L-threonyl-[protein] + ATP = O-phospho-L-threonyl-[protein] + ADP + H(+). Legume-lectin receptor-like kinase required for normal pollen development and male fertility. Regulates pollen exine assembly and aperture development. Plays a critical role in annulus formation, and may participate in the formation of the fibrillar-granular layer underneath the operculum. May function by regulating the expression of genes involved in pollen exine development. Kinase activity is required for its function in pollen development. This is L-type lectin-domain containing receptor kinase S.7 from Oryza sativa subsp. japonica (Rice).